The primary structure comprises 195 residues: HTH-type transcriptional regulator BetI (195 aa).

Residues 8 to 68 (SIRRRQLIDA…ATMRDITSQL (61 aa)) enclose the HTH tetR-type domain. Residues 31–50 (TIAQIARRAGVSTGIISHYF) constitute a DNA-binding region (H-T-H motif).

It functions in the pathway amine and polyamine biosynthesis; betaine biosynthesis via choline pathway [regulation]. Its function is as follows. Repressor involved in the biosynthesis of the osmoprotectant glycine betaine. It represses transcription of the choline transporter BetT and the genes of BetAB involved in the synthesis of glycine betaine. The sequence is that of HTH-type transcriptional regulator BetI from Escherichia coli O127:H6 (strain E2348/69 / EPEC).